A 757-amino-acid polypeptide reads, in one-letter code: Myb-related protein A (757 aa).

HTH myb-type domains are found at residues 30–81, 82–137, and 138–188; these read KKIC…QKVL, NPEL…NPEV, and KKSS…RRKV. 3 DNA-binding regions (H-T-H motif) span residues 58-81, 110-133, and 161-184; these read WAFI…QKVL, WSLI…HNHL, and WAEI…NSTM. The disordered stretch occupies residues 187–209; it reads KVEQEGYLQDGTKSSSERTGSST. The span at 197–209 shows a compositional bias: polar residues; that stretch reads GTKSSSERTGSST. Positions 235–300 are transcriptional activation domain; it reads IPVYQYASPE…RLSSQAGSLP (66 aa). A negative regulatory domain region spans residues 303-558; sequence SGSFVMEDCV…IRRSLLGSTP (256 aa).

In terms of assembly, component of the DREAM complex. In terms of tissue distribution, expressed ubiquitously.

It is found in the nucleus. Functionally, strong transcriptional activator; DNA-binding protein that specifically recognize the sequence 5'-YAAC[GT]G-3'. Could have a role in the proliferation and/or differentiation of neurogenic, spermatogenic and B-lymphoid cells. This Gallus gallus (Chicken) protein is Myb-related protein A (MYBL1).